Here is a 258-residue protein sequence, read N- to C-terminus: UPF0246 protein ETA_07010 (258 aa).

Belongs to the UPF0246 family.

In Erwinia tasmaniensis (strain DSM 17950 / CFBP 7177 / CIP 109463 / NCPPB 4357 / Et1/99), this protein is UPF0246 protein ETA_07010.